The chain runs to 477 residues: Aspartyl/glutamyl-tRNA(Asn/Gln) amidotransferase subunit B (477 aa).

Belongs to the GatB/GatE family. GatB subfamily. As to quaternary structure, heterotrimer of A, B and C subunits.

It catalyses the reaction L-glutamyl-tRNA(Gln) + L-glutamine + ATP + H2O = L-glutaminyl-tRNA(Gln) + L-glutamate + ADP + phosphate + H(+). The enzyme catalyses L-aspartyl-tRNA(Asn) + L-glutamine + ATP + H2O = L-asparaginyl-tRNA(Asn) + L-glutamate + ADP + phosphate + 2 H(+). Its function is as follows. Allows the formation of correctly charged Asn-tRNA(Asn) or Gln-tRNA(Gln) through the transamidation of misacylated Asp-tRNA(Asn) or Glu-tRNA(Gln) in organisms which lack either or both of asparaginyl-tRNA or glutaminyl-tRNA synthetases. The reaction takes place in the presence of glutamine and ATP through an activated phospho-Asp-tRNA(Asn) or phospho-Glu-tRNA(Gln). This chain is Aspartyl/glutamyl-tRNA(Asn/Gln) amidotransferase subunit B, found in Oenococcus oeni (strain ATCC BAA-331 / PSU-1).